The following is a 249-amino-acid chain: uncharacterized protein (249 aa).

2 stretches are compositionally biased toward polar residues: residues 66–79 (NASL…TISP) and 92–119 (ASGS…SSSE). Residues 66–142 (NASLESGQSS…GPTSPRVTPG (77 aa)) are disordered.

The protein resides in the plastid. It localises to the chloroplast. This is an uncharacterized protein from Chlorella vulgaris (Green alga).